The primary structure comprises 126 residues: Probable prefoldin subunit 6 (126 aa).

Belongs to the prefoldin subunit beta family. As to quaternary structure, heterohexamer of two PFD-alpha type and four PFD-beta type subunits. Expressed in embryonic blastomeres and gonads.

It is found in the cytoplasm. In terms of biological role, binds specifically to cytosolic chaperonin (c-CPN) and transfers target proteins to it. Binds to nascent polypeptide chain and promotes folding in an environment in which there are many competing pathways for nonnative proteins. Required for positioning of the mitotic spindle. The chain is Probable prefoldin subunit 6 (pfd-6) from Caenorhabditis elegans.